Reading from the N-terminus, the 241-residue chain is Demethylmenaquinone methyltransferase (241 aa).

Residues T60, D81, and D106–A107 each bind S-adenosyl-L-methionine.

The protein belongs to the class I-like SAM-binding methyltransferase superfamily. MenG/UbiE family.

The catalysed reaction is a 2-demethylmenaquinol + S-adenosyl-L-methionine = a menaquinol + S-adenosyl-L-homocysteine + H(+). It participates in quinol/quinone metabolism; menaquinone biosynthesis; menaquinol from 1,4-dihydroxy-2-naphthoate: step 2/2. Functionally, methyltransferase required for the conversion of demethylmenaquinol (DMKH2) to menaquinol (MKH2). The chain is Demethylmenaquinone methyltransferase from Staphylococcus carnosus (strain TM300).